The chain runs to 114 residues: Iron-sulfur cluster insertion protein ErpA (114 aa).

Residues Cys-42, Cys-106, and Cys-108 each contribute to the iron-sulfur cluster site.

Belongs to the HesB/IscA family. Homodimer. Requires iron-sulfur cluster as cofactor.

In terms of biological role, required for insertion of 4Fe-4S clusters for at least IspG. In Buchnera aphidicola subsp. Acyrthosiphon pisum (strain APS) (Acyrthosiphon pisum symbiotic bacterium), this protein is Iron-sulfur cluster insertion protein ErpA.